The following is a 417-amino-acid chain: UPF0597 protein FMG_0209 (417 aa).

The protein belongs to the UPF0597 family.

The sequence is that of UPF0597 protein FMG_0209 from Finegoldia magna (strain ATCC 29328 / DSM 20472 / WAL 2508) (Peptostreptococcus magnus).